The following is a 202-amino-acid chain: Uclacyanin-2 (202 aa).

The N-terminal stretch at 1 to 29 (MAMNGLSKMAVAAATALLLVLTIVPGAVA) is a signal peptide. The Phytocyanin domain maps to 30–126 (VTYTIEWTTG…GMKLAVNVVA (97 aa)). Residue His-65 participates in Cu cation binding. Asn-86 carries an N-linked (GlcNAc...) asparagine glycan. Positions 106, 111, and 118 each coordinate Cu cation. Residues 129–181 (AGPPATPTPPSSTPGTPTTPESPPSGGSPTPTTPTPGAGSTSPPPPPKASGAS) are disordered. Low complexity predominate over residues 141 to 169 (TPGTPTTPESPPSGGSPTPTTPTPGAGST). The GPI-anchor amidated serine moiety is linked to residue Ser-178. Residues 179–202 (GASKGVMSYVLVGVSMVLGYGLWM) constitute a propeptide, removed in mature form.

It localises to the cell membrane. Probably acts as an electron carrier involved in oxygen activation and/or lignin formation. The protein is Uclacyanin-2 of Arabidopsis thaliana (Mouse-ear cress).